Reading from the N-terminus, the 320-residue chain is PUP1 protein homolog (320 aa).

The next 2 helical transmembrane spans lie at 66–85 (MWGG…AYRY) and 100–119 (FVLG…RSMY). The tract at residues 205–320 (GGVFNGSPFM…QSGRYGGNRS (116 aa)) is disordered. Ser-230 bears the Phosphoserine mark. Positions 253 to 266 (GDNSSSSSWENIRN) are enriched in polar residues. Positions 267–284 (TSRDQSQESDASVDHESD) are enriched in basic and acidic residues.

Belongs to the PUP1 family.

The protein resides in the mitochondrion membrane. This is PUP1 protein homolog from Saccharomyces cerevisiae (strain ATCC 204508 / S288c) (Baker's yeast).